Consider the following 107-residue polypeptide: Translation initiation factor IF-1, chloroplastic (107 aa).

The 76-residue stretch at 8-83 (REKKNPREAK…SKGRIIYRLP (76 aa)) folds into the S1-like domain. A disordered region spans residues 81–107 (RLPHKDSKRTEDSKDTEDLKDTKDSKD). Residues 83–107 (PHKDSKRTEDSKDTEDLKDTKDSKD) show a composition bias toward basic and acidic residues.

This sequence belongs to the IF-1 family. Component of the 30S ribosomal translation pre-initiation complex which assembles on the 30S ribosome in the order IF-2 and IF-3, IF-1 and N-formylmethionyl-tRNA(fMet); mRNA recruitment can occur at any time during PIC assembly.

The protein resides in the plastid. It is found in the chloroplast. In terms of biological role, one of the essential components for the initiation of protein synthesis. Stabilizes the binding of IF-2 and IF-3 on the 30S subunit to which N-formylmethionyl-tRNA(fMet) subsequently binds. Helps modulate mRNA selection, yielding the 30S pre-initiation complex (PIC). Upon addition of the 50S ribosomal subunit IF-1, IF-2 and IF-3 are released leaving the mature 70S translation initiation complex. The sequence is that of Translation initiation factor IF-1, chloroplastic from Saccharum hybrid (Sugarcane).